Reading from the N-terminus, the 54-residue chain is uncharacterized protein (54 aa).

The interval 34–54 (NNREKQKSGKLRELRRGFKTF) is disordered.

This is an uncharacterized protein from Acidianus two-tailed virus (ATV).